The sequence spans 1161 residues: Type IV pilus biogenesis factor PilY1 (1161 aa).

An N-terminal signal peptide occupies residues 1–30; that stretch reads MKSVLHQIGKTSLAAALSGAVLLSAQTTHA. Residues Asp598, Asp600, Asn602, and Asp606 each coordinate Ca(2+). The segment at 617-619 is integrin-binding motif RGD; it reads RGD. Ca(2+) contacts are provided by Asp849, Asn851, Asp853, Val855, and Asp857. The segment at 1136 to 1161 is disordered; that stretch reads SGECLTVNPGPNTRGRQNWRPIEGKN.

Belongs to the PilY1 family. As to quaternary structure, interacts (via C-terminus) with host integrins alpha-V/beta-3 (ITGAV/ITGB3) and alpha-V/beta-5 (ITGAV/ITGB5).

It is found in the fimbrium. Its subcellular location is the membrane. The protein resides in the cytoplasm. It localises to the cytosol. Functionally, involved in pilus assembly, twitching motility and adhesion to host cells. Primes type IV pili (T4P) assembly and is required for inclusion of minor pilins PilV, PilW and PilX to the surface pili. Stabilizes assembled pilus fibers likely by antagonizing retraction mediated by PilT. Calcium-binding and calcium release by PilY1 seem to be essential for twitching motility and for regulation of pilus retraction dynamics of PilT. The chain is Type IV pilus biogenesis factor PilY1 from Pseudomonas aeruginosa (strain ATCC 15692 / DSM 22644 / CIP 104116 / JCM 14847 / LMG 12228 / 1C / PRS 101 / PAO1).